A 314-amino-acid polypeptide reads, in one-letter code: Probable cell division protein WhiA (314 aa).

A DNA-binding region (H-T-H motif) is located at residues Ser274–Ser308.

Belongs to the WhiA family.

Involved in cell division and chromosome segregation. In Staphylococcus haemolyticus (strain JCSC1435), this protein is Probable cell division protein WhiA.